An 86-amino-acid chain; its full sequence is V-type proton ATPase subunit e (86 aa).

A helical membrane pass occupies residues 1-21 (MGILIPLVSVSAFWAIIGFGG). At 22-32 (PWIVPKGPNRG) the chain is on the cytoplasmic side. A helical membrane pass occupies residues 33 to 53 (IIQLMIIMTAVCCWMFWIMVF). Residues 54-86 (LHQLNPLIGPQINVKTIRWISEKWGDAPNVINN) lie on the Lumenal side of the membrane.

This sequence belongs to the V-ATPase e1/e2 subunit family. V-ATPase is a heteromultimeric enzyme made up of two complexes: the ATP-hydrolytic V1 complex and the proton translocation V0 complex. The V1 complex consists of three catalytic AB heterodimers that form a heterohexamer, three peripheral stalks each consisting of EG heterodimers, one central rotor including subunits D and F, and the regulatory subunits C and H. The proton translocation complex V0 consists of the proton transport subunit a, a ring of proteolipid subunits c9c'', rotary subunit d, subunits e and f, and the accessory subunits vah-19/Ac45 and vah-20/PRR.

Its subcellular location is the apical cell membrane. Subunit of the V0 complex of vacuolar(H+)-ATPase (V-ATPase), a multisubunit enzyme composed of a peripheral complex (V1) that hydrolyzes ATP and a membrane integral complex (V0) that translocates protons. V-ATPase is responsible for acidifying and maintaining the pH of intracellular compartments and in some cell types, is targeted to the plasma membrane, where it is responsible for acidifying the extracellular environment. During embryonic development, the V-ATPase is required to repress fusion of epidermal cells probably by negatively regulating eff-1-mediated cell fusion. The chain is V-type proton ATPase subunit e from Caenorhabditis elegans.